Reading from the N-terminus, the 266-residue chain is Imidazole glycerol phosphate synthase subunit HisF (266 aa).

Active-site residues include Asp11 and Asp130.

Belongs to the HisA/HisF family. As to quaternary structure, heterodimer of HisH and HisF.

It is found in the cytoplasm. The enzyme catalyses 5-[(5-phospho-1-deoxy-D-ribulos-1-ylimino)methylamino]-1-(5-phospho-beta-D-ribosyl)imidazole-4-carboxamide + L-glutamine = D-erythro-1-(imidazol-4-yl)glycerol 3-phosphate + 5-amino-1-(5-phospho-beta-D-ribosyl)imidazole-4-carboxamide + L-glutamate + H(+). Its pathway is amino-acid biosynthesis; L-histidine biosynthesis; L-histidine from 5-phospho-alpha-D-ribose 1-diphosphate: step 5/9. IGPS catalyzes the conversion of PRFAR and glutamine to IGP, AICAR and glutamate. The HisF subunit catalyzes the cyclization activity that produces IGP and AICAR from PRFAR using the ammonia provided by the HisH subunit. In Delftia acidovorans (strain DSM 14801 / SPH-1), this protein is Imidazole glycerol phosphate synthase subunit HisF.